A 197-amino-acid polypeptide reads, in one-letter code: Holliday junction branch migration complex subunit RuvA (197 aa).

Residues 1-63 (MFEYLNGKLV…EDAHSLYGFV (63 aa)) form a domain I region. Residues 64–142 (NESEKALFLR…ATGAVGISLL (79 aa)) are domain II. The tract at residues 142–146 (LDAAP) is flexible linker. The interval 147-197 (AGNLALEEAIEALQALGYKATELKKIEKKLEQEAGLTSEEYIKSALKLMMK) is domain III.

Belongs to the RuvA family. As to quaternary structure, homotetramer. Forms an RuvA(8)-RuvB(12)-Holliday junction (HJ) complex. HJ DNA is sandwiched between 2 RuvA tetramers; dsDNA enters through RuvA and exits via RuvB. An RuvB hexamer assembles on each DNA strand where it exits the tetramer. Each RuvB hexamer is contacted by two RuvA subunits (via domain III) on 2 adjacent RuvB subunits; this complex drives branch migration. In the full resolvosome a probable DNA-RuvA(4)-RuvB(12)-RuvC(2) complex forms which resolves the HJ.

Its subcellular location is the cytoplasm. The RuvA-RuvB-RuvC complex processes Holliday junction (HJ) DNA during genetic recombination and DNA repair, while the RuvA-RuvB complex plays an important role in the rescue of blocked DNA replication forks via replication fork reversal (RFR). RuvA specifically binds to HJ cruciform DNA, conferring on it an open structure. The RuvB hexamer acts as an ATP-dependent pump, pulling dsDNA into and through the RuvAB complex. HJ branch migration allows RuvC to scan DNA until it finds its consensus sequence, where it cleaves and resolves the cruciform DNA. This is Holliday junction branch migration complex subunit RuvA from Lactococcus lactis subsp. cremoris (strain SK11).